A 429-amino-acid polypeptide reads, in one-letter code: 4-hydroxy-3-methylbut-2-en-1-yl diphosphate synthase (flavodoxin) (429 aa).

Cysteine 317, cysteine 320, cysteine 363, and glutamate 370 together coordinate [4Fe-4S] cluster.

Belongs to the IspG family. [4Fe-4S] cluster serves as cofactor.

The enzyme catalyses (2E)-4-hydroxy-3-methylbut-2-enyl diphosphate + oxidized [flavodoxin] + H2O + 2 H(+) = 2-C-methyl-D-erythritol 2,4-cyclic diphosphate + reduced [flavodoxin]. The protein operates within isoprenoid biosynthesis; isopentenyl diphosphate biosynthesis via DXP pathway; isopentenyl diphosphate from 1-deoxy-D-xylulose 5-phosphate: step 5/6. In terms of biological role, converts 2C-methyl-D-erythritol 2,4-cyclodiphosphate (ME-2,4cPP) into 1-hydroxy-2-methyl-2-(E)-butenyl 4-diphosphate. The protein is 4-hydroxy-3-methylbut-2-en-1-yl diphosphate synthase (flavodoxin) of Deinococcus radiodurans (strain ATCC 13939 / DSM 20539 / JCM 16871 / CCUG 27074 / LMG 4051 / NBRC 15346 / NCIMB 9279 / VKM B-1422 / R1).